A 946-amino-acid chain; its full sequence is Zinc finger protein rotund (946 aa).

2 disordered regions span residues 10–30 and 156–269; these read GPQLAHHPHSNPHNSSHGHSD and FRKP…HNLN. Residues 161 to 176 are compositionally biased toward polar residues; the sequence is NNNGYSWSTGNNNEVV. The span at 177-188 shows a compositional bias: low complexity; sequence SHSSNGHTNNHP. Composition is skewed to polar residues over residues 198–230 and 242–269; these read ASATQATSVSAINLNQAQPASQTRSNFGSSIKS and TCKSQENNSGQNPTPNSLSDHNPAHNLN. C2H2-type zinc fingers lie at residues 488–510, 517–539, 545–567, 573–597, 603–625, and 634–656; these read YQCKMCPQIFSSKADLQLHTQIH, YKCTQCSKAFANSSYLSQHTRIH, YRCEICQRKFTQLSHLQQHIRTH, YKCRHPGCQKAFSQLSNLQSHSRCH, FKCNSCYKCFSDEPSLLEHIPKH, and HICQYCGKSYTQETYLTKHMQKH. The tract at residues 683-853 is disordered; the sequence is GGSANPANGP…TPSAVGPYDA (171 aa). Low complexity-rich tracts occupy residues 739-762 and 770-790; these read HQQQQQQQQQQQQQQQQQQQQQQQ and HGVPPQQHVPPQQQQQQQQQQ. Positions 813 to 822 are enriched in polar residues; it reads TAPNGSQSNG. The span at 828-841 shows a compositional bias: basic and acidic residues; the sequence is QPHHRMPDPVREDI.

This sequence belongs to the krueppel C2H2-type zinc-finger protein family. As to quaternary structure, interacts with nab; which acts as a corepressor. Isoform rn and isoform roe are expressed in non-overlapping domains in the larval imaginal disks. Isoform rn is first expressed during the early third larval instar in the leg, wing, haltere and antennal part of the eye-antennal imaginal disk. It is observed as a ring in the leg and antenna disks and in the presumptive wing pouch and capitellum of wing and haltere disks respectively. In wing disk it is expressed in 3 concentric domains in the wing pouch. In late third instar, expression of isoform rn in the leg disk is no longer evident, but is maintained in the other disks. Isoform roe appears in the third instar and is confined to the eye part of the eye-antennal imaginal disk in a band of 4-6 cells at the morphogenetic furrow. There is no evidence of roe expression in other imaginal disks.

It is found in the nucleus. Functionally, transcription factor involved in imaginal disks development. Isoform rn is required in the wings, antenna, haltere, proboscis and legs disks, while isoform roe is required in the eye disk. Together with nab corepressor, it is involved in the initiation and maintenance of wingless (wg) expression in the wing hinge, by limiting the expression of wg to this compartment. Also required for the epithelial-mesenchymal transition branch of basolateral junctions signaling. This Drosophila melanogaster (Fruit fly) protein is Zinc finger protein rotund.